A 377-amino-acid chain; its full sequence is Serine protease inhibitor (377 aa).

The first 27 residues, 1–27, serve as a signal peptide directing secretion; sequence MAALQAAVSSQLAISFFSSLIVPGAEK. N-linked (GlcNAc...) asparagine glycosylation is present at asparagine 301. Residues 328-349 are RCL; the sequence is GTEAAAATGFGVNFMSMPMQVR. N-linked (GlcNAc...) asparagine glycosylation occurs at asparagine 361.

Belongs to the serpin family.

Functionally, inhibitor of serine proteases. Inhibits chymotrypsin, cathepsin G and human neutrophil elastase. The protein is Serine protease inhibitor of Cyanea capillata (Lion's mane jellyfish).